We begin with the raw amino-acid sequence, 137 residues long: Protein Turandot X (137 aa).

The signal sequence occupies residues 1 to 24; that stretch reads MRVPVFQLSCLLGLIVCLLCSVKA.

It belongs to the Turandot family.

It is found in the secreted. A humoral factor that may play a role in stress tolerance. This Drosophila pseudoobscura pseudoobscura (Fruit fly) protein is Protein Turandot X.